The primary structure comprises 276 residues: Expansin-like A3 (276 aa).

The signal sequence occupies residues 1–28; sequence MAVLLSILSSSFLLLLAASSSSTPRASA. The Expansin-like EG45 domain occupies 52-158; it reads GGGCGYGAMA…RRIPCDYKDK (107 aa). N-linked (GlcNAc...) asparagine glycans are attached at residues Asn115 and Asn159. Residues 172–255 form the Expansin-like CBD domain; that stretch reads NNLVIKFLYQ…NWQPGQVYDT (84 aa).

This sequence belongs to the expansin family. Expansin-like A subfamily.

It localises to the secreted. The protein is Expansin-like A3 (EXLA3) of Oryza sativa subsp. japonica (Rice).